Reading from the N-terminus, the 1288-residue chain is Outer capsid protein lambda-2 (1288 aa).

ATP is bound at residue 892-899; sequence GAAAAGKS.

It belongs to the orthoreovirus lambda-2 protein family. In terms of assembly, interacts with protein mu-NS; in viral inclusions.

Its subcellular location is the virion. It catalyses the reaction a 5'-end diphospho-ribonucleoside in mRNA + GTP + H(+) = a 5'-end (5'-triphosphoguanosine)-ribonucleoside in mRNA + diphosphate. The catalysed reaction is a 5'-end (5'-triphosphoguanosine)-ribonucleoside in mRNA + S-adenosyl-L-methionine = a 5'-end (N(7)-methyl 5'-triphosphoguanosine)-ribonucleoside in mRNA + S-adenosyl-L-homocysteine. Its function is as follows. Outer capsid protein involved in mRNA capping. Catalyzes the last 3 enzymatic activities for formation of the 5' cap structure on the viral plus-strand transcripts, namely the RNA guanylyltransferase, RNA-7N- and RNA-2'O-methyltransferase activities. This is Outer capsid protein lambda-2 (L2) from Reovirus type 2 (strain D5/Jones) (T2J).